The following is a 420-amino-acid chain: Cytochrome P-450 monooxygenase DoxA (420 aa).

Cys367 is a heme binding site.

The protein belongs to the cytochrome P450 family. Monomer. Heme serves as cofactor.

The protein localises to the cytoplasm. The enzyme catalyses 13-deoxydaunorubicin + NADPH + O2 + H(+) = 13-dihydrodaunorubicin + NADP(+) + H2O. It carries out the reaction 13-dihydrodaunorubicin + NADPH + O2 + H(+) = daunorubicin + NADP(+) + 2 H2O. It catalyses the reaction 13-deoxycarminomycin + NADPH + O2 + H(+) = 13-dihydrocarminomycin + NADP(+) + H2O. The catalysed reaction is 13-dihydrocarminomycin + NADPH + O2 + H(+) = carminomycin + NADP(+) + 2 H2O. The enzyme catalyses daunorubicin + NADPH + O2 + H(+) = doxorubicin + NADP(+) + H2O. The protein operates within antibiotic biosynthesis; daunorubicin biosynthesis. It participates in antibiotic biosynthesis; carminomycin biosynthesis. Its pathway is antibiotic biosynthesis; doxorubicin biosynthesis. Involved in the biosynthesis of the anthracyclines carminomycin, daunorubicin (daunomycin) and doxorubicin (adriamycin) which are aromatic polyketide antibiotics that exhibit high cytotoxicity and are widely applied in the chemotherapy of a variety of cancers. In vivo, DoxA catalyzes the C-13 hydroxylation of 13-deoxycarminomycin and 13-deoxydaunorubicin to yield 13-dihydrocarminomycin and 13-dihydrodaunorubicin, respectively, as well as the oxidation of these 13-dihydro-anthracyclines to their respective 13-keto forms, carminomycin and daunorubicin. In vivo, it also catalyzes the C-14 hydroxylation of daunorubicin to form doxorubicin. It can only use NADP. DoxA acts jointly with DnrV. The sequence is that of Cytochrome P-450 monooxygenase DoxA (doxA) from Streptomyces peucetius subsp. caesius.